We begin with the raw amino-acid sequence, 409 residues long: tRNA-specific 2-thiouridylase MnmA (409 aa).

ATP contacts are provided by residues 20-27 (AMSGGVDS) and Leu-46. The active-site Nucleophile is Cys-114. A disulfide bridge connects residues Cys-114 and Cys-210. Gly-138 provides a ligand contact to ATP. The interaction with tRNA stretch occupies residues 160-162 (RDQ). The active-site Cysteine persulfide intermediate is Cys-210.

The protein belongs to the MnmA/TRMU family.

Its subcellular location is the cytoplasm. The catalysed reaction is S-sulfanyl-L-cysteinyl-[protein] + uridine(34) in tRNA + AH2 + ATP = 2-thiouridine(34) in tRNA + L-cysteinyl-[protein] + A + AMP + diphosphate + H(+). In terms of biological role, catalyzes the 2-thiolation of uridine at the wobble position (U34) of tRNA, leading to the formation of s(2)U34. The sequence is that of tRNA-specific 2-thiouridylase MnmA from Bartonella henselae (strain ATCC 49882 / DSM 28221 / CCUG 30454 / Houston 1) (Rochalimaea henselae).